Here is a 156-residue protein sequence, read N- to C-terminus: Endogenous retrovirus group K member 18 Pro protein (156 aa).

The region spanning 21 to 96 (LEGLVDTGAD…IPLNLWGRDL (76 aa)) is the Peptidase A2 domain. The active site involves aspartate 26. A G-patch domain is found at 111–156 (YSPMSQKIMTKMGYIPGKGLGKNEDGIKVPIEAKINHGREGTGYPF).

This sequence belongs to the peptidase A2 family. HERV class-II K(HML-2) subfamily. In terms of assembly, active as a homodimer. In terms of processing, autoproteolytically processed at the N-terminus. Expected C-terminal autoprocessing not detected. The sequence shown is that of the processed Pro protein.

The enzyme catalyses Processing at the authentic HIV-1 PR recognition site and release of the mature p17 matrix and the p24 capsid protein, as a result of the cleavage of the -SQNY-|-PIVQ- cleavage site.. Retroviral proteases have roles in the processing of the primary translation products and the maturation of the viral particle. Endogenous Pro proteins may have kept, lost or modified their original function during evolution. This is Endogenous retrovirus group K member 18 Pro protein (ERVK-18) from Homo sapiens (Human).